Reading from the N-terminus, the 335-residue chain is Ig gamma-2A chain C region secreted form (335 aa).

3 Ig-like domains span residues 6-98 (PSVY…KKIE), 126-225 (PSVF…KTIS), and 234-330 (PQVY…KTIS). The N-linked (GlcNAc...) asparagine glycan is linked to asparagine 185.

The protein localises to the secreted. The polypeptide is Ig gamma-2A chain C region secreted form (Mus musculus (Mouse)).